Consider the following 334-residue polypeptide: tRNA-cytidine(32) 2-sulfurtransferase (334 aa).

The short motif at 74 to 79 (SGGKDS) is the PP-loop motif element. Residues C149, C152, and C240 each coordinate [4Fe-4S] cluster.

The protein belongs to the TtcA family. As to quaternary structure, homodimer. Requires Mg(2+) as cofactor. [4Fe-4S] cluster is required as a cofactor.

The protein localises to the cytoplasm. The catalysed reaction is cytidine(32) in tRNA + S-sulfanyl-L-cysteinyl-[cysteine desulfurase] + AH2 + ATP = 2-thiocytidine(32) in tRNA + L-cysteinyl-[cysteine desulfurase] + A + AMP + diphosphate + H(+). The protein operates within tRNA modification. Functionally, catalyzes the ATP-dependent 2-thiolation of cytidine in position 32 of tRNA, to form 2-thiocytidine (s(2)C32). The sulfur atoms are provided by the cysteine/cysteine desulfurase (IscS) system. The chain is tRNA-cytidine(32) 2-sulfurtransferase from Burkholderia ambifaria (strain ATCC BAA-244 / DSM 16087 / CCUG 44356 / LMG 19182 / AMMD) (Burkholderia cepacia (strain AMMD)).